Here is a 241-residue protein sequence, read N- to C-terminus: tRNA pseudouridine synthase A (241 aa).

Aspartate 51 serves as the catalytic Nucleophile. Tyrosine 110 serves as a coordination point for substrate.

The protein belongs to the tRNA pseudouridine synthase TruA family. As to quaternary structure, homodimer.

It catalyses the reaction uridine(38/39/40) in tRNA = pseudouridine(38/39/40) in tRNA. Formation of pseudouridine at positions 38, 39 and 40 in the anticodon stem and loop of transfer RNAs. The protein is tRNA pseudouridine synthase A of Campylobacter jejuni subsp. jejuni serotype O:2 (strain ATCC 700819 / NCTC 11168).